A 168-amino-acid chain; its full sequence is MPLHVSLANGNRDLDYDSVQPYFMCDDEEEDVHQQPPQPPAPSEDIWKKFELLPTPRPSPGHPGLYSPPCEAVAASFSPRDHDGDSFSTADLPELPGDAVKQSFVCDPDDETFVKNIILQDCMWNGFSASAKLVSKLDPYQAVRKEGASVSPAADVEPATPPDCTCNT.

Disordered regions lie at residues 26–94 (DDEE…DLPE) and 146–168 (EGASVSPAADVEPATPPDCTCNT). S59 and S67 each carry phosphoserine.

The protein resides in the nucleus. Its function is as follows. Seems to act as an inhibitor of cellular proliferation. The protein is Protein B-Myc (Mycb) of Rattus norvegicus (Rat).